The primary structure comprises 434 residues: MPVSARAGIVVTGTEVLTGRVQDANGPWIADRLLELGVELAHITICGDRPHDIEAQLRFLADQGVDLIVTSGGLGPTADDMTVEVVARFCGRELVLDAEVEEKIANILKKLMARNPAIQSALDPGTFESLRAANRKQAMVPAGAQVLDPVGTAPGVVVPGKPAVIVLPGPPRELQPMWHTAIQTPAAQQAIAGRTVYRQEMLRMFGLPESGLAETLREAEAAVPGFGQLEITTCLRRGEIEMVTRYEPTAATAYAQLTKLLRDKHGDQLYSEDGSRVDDLVARLLAGRRIATAESCTAGLLAARLTDRPGSSDYVAGGVVAYSNEAKAELLGVDPALIEAHGAVSEPVAQAMAAGARQRFAADTAVAITGIAGPGGGTEEKPVGTVCFSVQVGPPGATARSDTRTMRLPGNRSDIRERSTTVAMHLLRRLLTDA.

It belongs to the CinA family.

The protein is CinA-like protein of Mycolicibacterium paratuberculosis (strain ATCC BAA-968 / K-10) (Mycobacterium paratuberculosis).